Here is a 748-residue protein sequence, read N- to C-terminus: Adenosylcobalamin-dependent ribonucleoside-triphosphate reductase (748 aa).

Cysteines 123 and 426 form a disulfide. An effector region-1 region spans residues 151–162; sequence SMPYSFMFDELM. The segment at 172–320 is effector region-2; the sequence is TKDNIAKLPP…IGNLIGKTVV (149 aa). Active-site residues include Cys-415 and Glu-417. The adenosylcobalamin-binding-1 stretch occupies residues 572–633; that stretch reads FHYAGYLIQR…DPAFASAGTV (62 aa). Positions 692-733 are adenosylcobalamin-binding-2; the sequence is FKQAPKEPIDVKTYKQKCAAIHGSVAAVFAVQNADHDQKDLE.

The protein belongs to the class II ribonucleoside-triphosphate reductase family. Monomer. The cofactor is adenosylcob(III)alamin.

It catalyses the reaction a 2'-deoxyribonucleoside 5'-triphosphate + [thioredoxin]-disulfide + H2O = a ribonucleoside 5'-triphosphate + [thioredoxin]-dithiol. Allosterically regulated by ATP and dNTP. In Lacticaseibacillus paracasei (strain ATCC 334 / BCRC 17002 / CCUG 31169 / CIP 107868 / KCTC 3260 / NRRL B-441) (Lactobacillus paracasei), this protein is Adenosylcobalamin-dependent ribonucleoside-triphosphate reductase (rtpR).